A 196-amino-acid polypeptide reads, in one-letter code: GTP cyclohydrolase-2 (196 aa).

49–53 (RVHSE) lines the GTP pocket. Zn(2+) contacts are provided by Cys-54, Cys-65, and Cys-67. GTP-binding positions include Gln-70, 92–94 (EGR), and Thr-114. Asp-126 (proton acceptor) is an active-site residue. The Nucleophile role is filled by Arg-128. Residues Thr-149 and Lys-154 each contribute to the GTP site.

The protein belongs to the GTP cyclohydrolase II family. Homodimer. Zn(2+) serves as cofactor.

It catalyses the reaction GTP + 4 H2O = 2,5-diamino-6-hydroxy-4-(5-phosphoribosylamino)-pyrimidine + formate + 2 phosphate + 3 H(+). It functions in the pathway cofactor biosynthesis; riboflavin biosynthesis; 5-amino-6-(D-ribitylamino)uracil from GTP: step 1/4. Functionally, catalyzes the conversion of GTP to 2,5-diamino-6-ribosylamino-4(3H)-pyrimidinone 5'-phosphate (DARP), formate and pyrophosphate. In Escherichia coli O127:H6 (strain E2348/69 / EPEC), this protein is GTP cyclohydrolase-2.